The chain runs to 395 residues: GPI-anchor transamidase (395 aa).

The first 27 residues, 1-27, serve as a signal peptide directing secretion; the sequence is MAAPCFLTLRVATLAALALLSLGSSAA. At 28–368 the chain is on the lumenal side; the sequence is GHIEDQAEQF…PKPRDWHPPG (341 aa). Ca(2+) is bound by residues Asp-79, Ile-82, Glu-118, and Asp-120. The Proton donor role is filled by His-164. Catalysis depends on Cys-206, which acts as the Nucleophile; acyl-thioester intermediate. Positions 206, 232, and 234 each coordinate a protein. The segment at 231–236 is autoinhibitory loop; that stretch reads DSLSHQ. An intrachain disulfide couples Cys-275 to Cys-280. The helical transmembrane segment at 369 to 385 threads the bilayer; sequence GFILGLWALIIMVFFKT. Residues 386–395 lie on the Cytoplasmic side of the membrane; sequence YGIKHMKFIF.

Belongs to the peptidase C13 family. Heteropentamer. Part of the GPI-anchor transamidase complex, consisting of PIGK, PIGT, PIGS, PIGU and GAA1. Interacts with GPAA1. Interacts with PIGT; this interaction, via a disulfide link, stabilizes the expression of GAA1 and PIGK and links them to PIGS. The disulfide bond between PIGK/GPI8 and PIGT is important for normal enzyme activity.

Its subcellular location is the endoplasmic reticulum membrane. It functions in the pathway glycolipid biosynthesis; glycosylphosphatidylinositol-anchor biosynthesis. With respect to regulation, in the absence of proproteins substrates, exists in an inactive state with a disrupted catalytic site by an autoinhibitory loop. The binding of proprotein substrates, particularly the CSP region, to GPI-T triggers concerted conformational changes that alleviate the inhibition by the autoinhibitory loop. Meanwhile, proprotein residues near the omega- site induce the formation of a catalytic cleft for catalysis, following which the products are released and GPI-T reverts to the inactive state. Catalytic subunit of the glycosylphosphatidylinositol-anchor (GPI-anchor) transamidase (GPI-T) complex that catalyzes the formation of the linkage between a proprotein and a GPI-anchor and participates in GPI anchored protein biosynthesis. Recognizes diverse proproteins at a C-terminal signal peptide (CSP) region that lacks consensus sequence and replaces it with a GPI-anchor via a transamidation reaction. Transamidation catalysis reaction follows a two-phase mechanism. In the acyl-enzyme phase, the carbonyl group of the proproteins's omega-site undergoes a nucleophilic attack forming an enzyme-substrate thioester bond. Followed by a general acid catalysis that allows CSP releasing, regenerating the carbonyl, and forming the acyl-enzyme intermediate. In the GPI-anchor attachment phase, the amino group of the GPI-anchor's ethanolamine phosphate, the one on third mannose (EtNP3), mediates a nucleophilic attack on the carbonyl of the acyl-enzyme intermediate, replacing the CSP, allowing GPI-anchor attachment to the omega-residue, therefore forming the product and freeing the enzyme. The polypeptide is GPI-anchor transamidase (Mus musculus (Mouse)).